Reading from the N-terminus, the 264-residue chain is MLSHNTMVKQRKQQATAIMKEVHGNDVDGMDLGKKVSIPRDIMLEELSHLSNRGARLFKMRQRRSDKYTFENFQYQSRAQINHSIAMQNGKVDGSNLEGGSQQAPLTPPNTPDPRSPPNPDNIAPGYSGPLKEIPPEKFNTTAVPKYYQSPWEQAISNDPELLEALYPKLFKPEGKAELPDYRSFNRVATPFGGFEKASRMVKFKVPDFELLLLTDPRFMSFVNPLSGRRSFNRTPKGWISENIPIVITTEPTDDTTVPESEDL.

Omega-N-methylarginine is present on Arg-53. A disordered region spans residues 90-135; that stretch reads GKVDGSNLEGGSQQAPLTPPNTPDPRSPPNPDNIAPGYSGPLKEIP. Ser-101 is modified (phosphoserine). A compositionally biased stretch (pro residues) spans 106–120; that stretch reads LTPPNTPDPRSPPNP. A phosphothreonine mark is found at Thr-107 and Thr-111. Phosphoserine is present on Ser-116.

It belongs to the myozenin family. Interacts via its C-terminus with spectrin repeats 3 and 4 of ACTN2. Interacts with ACTN1, LDB3, MYOT and PPP3CA.

It localises to the cytoplasm. It is found in the myofibril. The protein resides in the sarcomere. The protein localises to the z line. In terms of biological role, myozenins may serve as intracellular binding proteins involved in linking Z line proteins such as alpha-actinin, gamma-filamin, TCAP/telethonin, LDB3/ZASP and localizing calcineurin signaling to the sarcomere. Plays an important role in the modulation of calcineurin signaling. May play a role in myofibrillogenesis. The chain is Myozenin-2 (MYOZ2) from Pongo abelii (Sumatran orangutan).